We begin with the raw amino-acid sequence, 136 residues long: Urease subunit beta (136 aa).

The segment at 113 to 136 is disordered; the sequence is NDEYAGVFGDNGAENVNKKGGKRS.

Belongs to the urease beta subunit family. As to quaternary structure, heterotrimer of UreA (gamma), UreB (beta) and UreC (alpha) subunits. Three heterotrimers associate to form the active enzyme.

The protein localises to the cytoplasm. The catalysed reaction is urea + 2 H2O + H(+) = hydrogencarbonate + 2 NH4(+). It functions in the pathway nitrogen metabolism; urea degradation; CO(2) and NH(3) from urea (urease route): step 1/1. The chain is Urease subunit beta from Staphylococcus aureus (strain USA300).